The sequence spans 338 residues: Probable 1-aminocyclopropane-1-carboxylate deaminase (338 aa).

Lys51 carries the N6-(pyridoxal phosphate)lysine modification. Ser78 serves as the catalytic Nucleophile.

The protein belongs to the ACC deaminase/D-cysteine desulfhydrase family. Requires pyridoxal 5'-phosphate as cofactor.

It carries out the reaction 1-aminocyclopropane-1-carboxylate + H2O = 2-oxobutanoate + NH4(+). In terms of biological role, catalyzes a cyclopropane ring-opening reaction, the irreversible conversion of 1-aminocyclopropane-1-carboxylate (ACC) to ammonia and alpha-ketobutyrate. The polypeptide is Probable 1-aminocyclopropane-1-carboxylate deaminase (Schizosaccharomyces pombe (strain 972 / ATCC 24843) (Fission yeast)).